The following is a 501-amino-acid chain: Mitogen-activated protein kinase 16 (501 aa).

Residues 22–313 (YEVTEVVGKG…AAEALTDPYF (292 aa)) form the Protein kinase domain. Residues 28–36 (VGKGSYGVV) and Lys51 each bind ATP. Asp148 (proton acceptor) is an active-site residue. Thr184 is modified (phosphothreonine). The TXY signature appears at 184 to 186 (TDY). The residue at position 186 (Tyr186) is a Phosphotyrosine. A disordered region spans residues 477–501 (DEESMSEYMNEAADGVPHKIAQLKT).

This sequence belongs to the protein kinase superfamily. CMGC Ser/Thr protein kinase family. MAP kinase subfamily. Dually phosphorylated on Thr-184 and Tyr-186, which activates the enzyme.

The catalysed reaction is L-seryl-[protein] + ATP = O-phospho-L-seryl-[protein] + ADP + H(+). It carries out the reaction L-threonyl-[protein] + ATP = O-phospho-L-threonyl-[protein] + ADP + H(+). With respect to regulation, activated by threonine and tyrosine phosphorylation. The chain is Mitogen-activated protein kinase 16 (MPK16) from Oryza sativa subsp. japonica (Rice).